A 321-amino-acid polypeptide reads, in one-letter code: MTAWLLPENVEDVLPPQAWRLEAMRRALLDLFRERGYQLVIPPLIEYVESLLTGVGADLDLKTFKLVDQLSGRLMAVRADITPQVARIDAHLLGANAINRLCYTGSVLHTQSDGFHRSREPIQIGAEVYGDAGIEADLEILSLMLQGLAACGVEGVQLDVGHVGVYRALAQEAGFDNATEHELFCALQAKDASAVDVLTAGLPMALRDAFAALPQLYGGREVLAEARARLPHLPAVAAALDTLVSLDQALGGVELAYDLAELRGYGYHSGVVFAAYTRGRSHAIAQGGRYDEVGRVFGRARPATGFSMDLRELVVAGSASE.

The protein belongs to the class-II aminoacyl-tRNA synthetase family. HisZ subfamily. In terms of assembly, heteromultimer composed of HisG and HisZ subunits.

It localises to the cytoplasm. Its pathway is amino-acid biosynthesis; L-histidine biosynthesis; L-histidine from 5-phospho-alpha-D-ribose 1-diphosphate: step 1/9. Required for the first step of histidine biosynthesis. May allow the feedback regulation of ATP phosphoribosyltransferase activity by histidine. The polypeptide is ATP phosphoribosyltransferase regulatory subunit (Thiobacillus denitrificans (strain ATCC 25259 / T1)).